The sequence spans 1728 residues: MNVQACSRCGYGVYPAEKISCIDQTWHKACFHCEVCKMMLSVNNFVSHQKKPYCHAHNPKNNTFTSVYHTPLNLTLKKSVAAMGGIDGKEDGEPFKSVLHWDMKSKAGAGAASRLMNERDYWPGYAEGNTWCPGALPDPEIVRMVEARQSLGEGYTEDREQQQGKGSFPAMITPAYQRAKAANQLASQVQYKRGHDERVSTFTPVADTPELLRAKAGGQLQNDVRYTEDGGQQRGKGSFPAMITPAYQIAKRATELASDVRYHQQYHREMKGMASPVGAEGGMTKDSVDRCGQVYSEECDEPRGKGSFPAMITPAYQNAKKANELVSDIKYRQDFHKMKGAAHFHSLAAQDNLVLKRAQSVSKLVSEVEYKKGLENSKGHSINYCETPQFRNVSKISKFTSDNKYKENYQTQLRGHYDGVGMDRRMLHALKVGSLASNVAYKADYKHDVVDYNYLATATPFYQTTMRLVPLKDVNYRQNIDRMKFSSVTNTPQIVQAKINAQQLSHVNYRADYERNKLNYTLPQDAPQLLKAKANAELFSEVKYKEGWQKTKGKGFEMKLDAMSLLAAKASGELASSVKYKEEYEKMKGRALGATDSKLLHSLQVAKMSSEVEYKKGFEESKTHFNLPMDMVNLRHAKKAQALASDLDYRKKLHDYTVLPEDMKTQWAKKAYGLQSELQYKADLAWMRGVGWLTEGSLNLEQAKKAGQLISEKNYRQRVDELKFTSVADSSQMEHAKKSQGLQNAVAYKAGNEQSVHQYTISKDEPLFLRARANAAQLSETLYKSSWEKQKAKGFELRLDSLAFLTAKAKRDLASEVKYKEDYERSRGKLIGAKSAQGDSQMSHSLQMSKLQSDLEYKKGFEDTRSQCHISLDMVHLVHARQAQHLATDVGYRTASHCFTALPTDMKVEWAKKAYGLQSDNQYRADMKWMKGTGWVATGSLHVEQAKKAGELISEKKYRQHPDALKFTSIKDTPEMVQARISYTQAVDRLYREQGENVKHHYTQTADLPEVLLAKLNAMNISETRYKESWSRLRDGGYKLRLDALPFQAAKASSEVISDYKYKEAFERMKGQMLGSRSLEDDLSLAHSVHATSLQSDVNYKKGFEHAKAHFHLPLDMVTLVHAKKAQTLASDQDYRHPLPQHTVLAEDLRLSCAKKAHKLQSENLYRSDLNFMRGVPCVVPGTLEIEGRKKASELISESKYRQHPGSFKYTAVTDTPNLLHAKYSNQITNERLYKAAGEDARHQYTMTLGLPEFIRAKTNAANLSEAKYKEAWHNLRAQGYKLTIDALPFQAARASGDIASDFLYRHEFVKERGQLIGVRNVSDDPRLLHCLRMGQLQSENQYRKEAASSQAQCHLPMDMMYLVHARKAQALASDHDYRTQCHEFTALPEDLKMAWAKKAHALQSEFRYKADLMGMKGTGWLALQSPQIESAKKAGDLISETKYRKKPDSIKFTTVVDSPDLIHAKESYMHCNERLYRLGDAASLHRYTPIPDHPDFTRARMNAMHLSDKVYRNAWEQSRAGGYDFRLDAIPFQTARVSRDIASDFRYKEAFLRDRGLQIGYRSISDDPRTTHFLRVGRLQSDNEYRKAFAKGRSQFHSRADQPGFLQAKRSQQLASDVLYRQPLPQHTSDPEQLGLKHARKAHQLQSDVKYKSDLNLTRGVGWTPPGSYKVEMARRAAELANRRGPGIRGASVEPEAAAALGDHQSRGVNPDASEILHIHKKKTLLM.

Residues 4-64 (QACSRCGYGV…HAHNPKNNTF (61 aa)) enclose the LIM zinc-binding domain. Nebulin repeat units follow at residues 173–200 (TPAY…ERVS), 201–235 (TFTP…QQRG), 244–271 (TPAY…REMK), 313–340 (TPAY…KMKG), 345–379 (HSLA…NSKG), 386–414 (ETPQ…TQLR), 416–450 (HYDG…HDVV), 484–518 (KFSS…RNKL), 519–553 (NYTL…KTKG), 555–589 (GFEM…KMKG), 599–623 (LLHS…ESKT), 624–658 (HFNL…DYTV), 659–689 (LPED…WMRG), 699–721 (NLEQ…RVDE), 723–757 (KFTS…QSVH), 758–792 (QYTI…KQKA), 794–828 (GFEL…RSRG), 841–866 (QMSH…DTRS), 867–893 (QCHI…VGYR), 898–932 (CFTA…WMKG), 943–960 (VEQA…KYRQ), 966–1000 (KFTS…NVKH), 1001–1035 (HYTQ…RLRD), 1037–1071 (GYKL…RMKG), 1075–1109 (GSRS…HAKA), 1110–1136 (HFHL…QDYR), 1141–1175 (QHTV…FMRG), 1180–1203 (VPGT…KYRQ), 1209–1243 (KYTA…DARH), 1244–1278 (QYTM…NLRA), 1280–1314 (GYKL…KERG), 1318–1352 (GVRN…SSQA), 1353–1379 (QCHL…HDYR), 1384–1418 (EFTA…GMKG), 1425–1446 (QSPQ…KYRK), 1452–1478 (KFTT…RLYR), 1487–1521 (RYTP…QSRA), 1523–1557 (GYDF…RDRG), 1561–1595 (GYRS…KGRS), 1596–1630 (QFHS…QHTS), and 1637–1661 (LKHA…LTRG). Phosphothreonine is present on Thr203. Ser1078 is modified (phosphoserine).

As to quaternary structure, interacts with actin, alpha-actinin, KLHL41, TLN1 and VCL. Interacts with CSRP3. In terms of tissue distribution, expressed in cardiac and skeletal muscle. Not detected in kidney, spleen, liver, brain, lung, stomach or uterus.

Its function is as follows. May be involved in anchoring the terminal actin filaments in the myofibril to the membrane and in transmitting tension from the myofibrils to the extracellular matrix. In Mus musculus (Mouse), this protein is Nebulin-related-anchoring protein.